The primary structure comprises 479 residues: Glutamate--tRNA ligase (479 aa).

Residues proline 9–threonine 19 carry the 'HIGH' region motif. The 'KMSKS' region motif lies at lysine 248–arginine 252. Lysine 251 contributes to the ATP binding site.

This sequence belongs to the class-I aminoacyl-tRNA synthetase family. Glutamate--tRNA ligase type 1 subfamily. In terms of assembly, monomer.

Its subcellular location is the cytoplasm. It carries out the reaction tRNA(Glu) + L-glutamate + ATP = L-glutamyl-tRNA(Glu) + AMP + diphosphate. Catalyzes the attachment of glutamate to tRNA(Glu) in a two-step reaction: glutamate is first activated by ATP to form Glu-AMP and then transferred to the acceptor end of tRNA(Glu). The sequence is that of Glutamate--tRNA ligase from Prochlorococcus marinus (strain MIT 9215).